The chain runs to 683 residues: DNA-directed RNA polymerase subunit beta' (683 aa).

Zn(2+)-binding residues include Cys-69, Cys-71, Cys-87, and Cys-90. The Mg(2+) site is built by Asp-489, Asp-491, and Asp-493.

This sequence belongs to the RNA polymerase beta' chain family. RpoC1 subfamily. In terms of assembly, in plastids the minimal PEP RNA polymerase catalytic core is composed of four subunits: alpha, beta, beta', and beta''. When a (nuclear-encoded) sigma factor is associated with the core the holoenzyme is formed, which can initiate transcription. It depends on Mg(2+) as a cofactor. Zn(2+) is required as a cofactor.

The protein localises to the plastid. It is found in the chloroplast. It carries out the reaction RNA(n) + a ribonucleoside 5'-triphosphate = RNA(n+1) + diphosphate. Functionally, DNA-dependent RNA polymerase catalyzes the transcription of DNA into RNA using the four ribonucleoside triphosphates as substrates. The polypeptide is DNA-directed RNA polymerase subunit beta' (Sorghum bicolor (Sorghum)).